Here is a 241-residue protein sequence, read N- to C-terminus: Pyridoxal phosphate phosphatase PHOSPHO2 (241 aa).

The Nucleophile role is filled by D8. Mg(2+) is bound by residues D8 and D10. D10 (proton donor) is an active-site residue. D19 and D99 together coordinate substrate. Position 179 (D179) interacts with Mg(2+).

Belongs to the HAD-like hydrolase superfamily. PHOSPHO family. The cofactor is Mg(2+).

The catalysed reaction is pyridoxal 5'-phosphate + H2O = pyridoxal + phosphate. In terms of biological role, phosphatase that has high activity toward pyridoxal 5'-phosphate (PLP). Also active at much lower level toward pyrophosphate, phosphoethanolamine (PEA), phosphocholine (PCho), phospho-l-tyrosine, fructose-6-phosphate, p-nitrophenyl phosphate, and h-glycerophosphate. In Rattus norvegicus (Rat), this protein is Pyridoxal phosphate phosphatase PHOSPHO2 (Phospho2).